We begin with the raw amino-acid sequence, 498 residues long: Glycerol kinase (498 aa).

ADP is bound at residue Thr-12. Thr-12, Thr-13, and Ser-14 together coordinate ATP. Thr-12 contacts sn-glycerol 3-phosphate. Arg-16 is a binding site for ADP. Sn-glycerol 3-phosphate contacts are provided by Arg-82, Glu-83, Tyr-134, and Asp-243. Positions 82, 83, 134, 243, and 244 each coordinate glycerol. ADP is bound by residues Thr-265 and Gly-308. Residues Thr-265, Gly-308, Gln-312, and Gly-411 each coordinate ATP. Gly-411 contributes to the ADP binding site.

Belongs to the FGGY kinase family.

It carries out the reaction glycerol + ATP = sn-glycerol 3-phosphate + ADP + H(+). It functions in the pathway polyol metabolism; glycerol degradation via glycerol kinase pathway; sn-glycerol 3-phosphate from glycerol: step 1/1. With respect to regulation, inhibited by fructose 1,6-bisphosphate (FBP). Its function is as follows. Key enzyme in the regulation of glycerol uptake and metabolism. Catalyzes the phosphorylation of glycerol to yield sn-glycerol 3-phosphate. This Brucella suis biovar 1 (strain 1330) protein is Glycerol kinase.